A 290-amino-acid chain; its full sequence is Protein-lysine methyltransferase METTL21E (290 aa).

Residues Trp-96, Gly-124 to Gly-126, Asp-145, Trp-176, and Ala-197 each bind S-adenosyl-L-methionine.

It belongs to the methyltransferase superfamily. METTL21 family.

Its function is as follows. Protein-lysine methyltransferase. This Bos taurus (Bovine) protein is Protein-lysine methyltransferase METTL21E (METTL21E).